Reading from the N-terminus, the 365-residue chain is Succinyl-diaminopimelate desuccinylase (365 aa).

Position 65 (His-65) interacts with Zn(2+). The active site involves Asp-67. Asp-96 lines the Zn(2+) pocket. The active-site Proton acceptor is the Glu-126. Zn(2+) is bound by residues Glu-127, Glu-155, and His-340.

The protein belongs to the peptidase M20A family. DapE subfamily. Homodimer. The cofactor is Zn(2+). It depends on Co(2+) as a cofactor.

It carries out the reaction N-succinyl-(2S,6S)-2,6-diaminopimelate + H2O = (2S,6S)-2,6-diaminopimelate + succinate. Its pathway is amino-acid biosynthesis; L-lysine biosynthesis via DAP pathway; LL-2,6-diaminopimelate from (S)-tetrahydrodipicolinate (succinylase route): step 3/3. In terms of biological role, catalyzes the hydrolysis of N-succinyl-L,L-diaminopimelic acid (SDAP), forming succinate and LL-2,6-diaminopimelate (DAP), an intermediate involved in the bacterial biosynthesis of lysine and meso-diaminopimelic acid, an essential component of bacterial cell walls. In Campylobacter jejuni subsp. doylei (strain ATCC BAA-1458 / RM4099 / 269.97), this protein is Succinyl-diaminopimelate desuccinylase.